The sequence spans 464 residues: Ubiquinone biosynthesis monooxygenase COQ6, mitochondrial (464 aa).

A mitochondrion-targeting transit peptide spans 1–24 (MRCLGGSSLSRLLRMLSQSQGRAL).

The protein belongs to the UbiH/COQ6 family. As to quaternary structure, component of a multi-subunit COQ enzyme complex, composed of at least coq3, coq4, coq5, coq6, coq7 and coq9. Interacts with coq8b and coq7. It depends on FAD as a cofactor.

It is found in the mitochondrion inner membrane. It localises to the golgi apparatus. The protein resides in the cell projection. The catalysed reaction is a 4-hydroxy-3-(all-trans-polyprenyl)benzoate + 2 reduced [2Fe-2S]-[ferredoxin] + O2 + 2 H(+) = a 3,4-dihydroxy-5-(all-trans-polyprenyl)benzoate + 2 oxidized [2Fe-2S]-[ferredoxin] + H2O. The enzyme catalyses a 2-methoxy-6-(all-trans-polyprenyl)phenol + 2 reduced [2Fe-2S]-[ferredoxin] + O2 + 2 H(+) = a 2-methoxy-6-(all-trans-polyprenyl)benzene-1,4-diol + 2 oxidized [2Fe-2S]-[ferredoxin] + H2O. The protein operates within cofactor biosynthesis; ubiquinone biosynthesis. Functionally, FAD-dependent monooxygenase required for two non-consecutive steps during ubiquinone biosynthesis. Required for the C5-ring hydroxylation during ubiquinone biosynthesis by catalyzing the hydroxylation of 4-hydroxy-3-(all-trans-polyprenyl)benzoic acid to 3,4-dihydroxy-5-(all-trans-polyprenyl)benzoic acid. Also acts downstream of coq4, for the C1-hydroxylation during ubiquinone biosynthesis by catalyzing the hydroxylation of 2-methoxy-6-(all-trans-polyprenyl)phenol to 2-methoxy-6-(all-trans-polyprenyl)benzene-1,4-diol. The electrons required for the hydroxylation reaction are funneled indirectly to coq6 from NADPH via a ferredoxin/ferredoxin reductase system. The polypeptide is Ubiquinone biosynthesis monooxygenase COQ6, mitochondrial (Xenopus tropicalis (Western clawed frog)).